The primary structure comprises 115 residues: Large ribosomal subunit protein uL18 (115 aa).

This sequence belongs to the universal ribosomal protein uL18 family. As to quaternary structure, part of the 50S ribosomal subunit; part of the 5S rRNA/L5/L18/L25 subcomplex. Contacts the 5S and 23S rRNAs.

This is one of the proteins that bind and probably mediate the attachment of the 5S RNA into the large ribosomal subunit, where it forms part of the central protuberance. The protein is Large ribosomal subunit protein uL18 of Ruthia magnifica subsp. Calyptogena magnifica.